The primary structure comprises 188 residues: Elongation factor P (188 aa).

The protein belongs to the elongation factor P family.

The protein localises to the cytoplasm. The protein operates within protein biosynthesis; polypeptide chain elongation. In terms of biological role, involved in peptide bond synthesis. Stimulates efficient translation and peptide-bond synthesis on native or reconstituted 70S ribosomes in vitro. Probably functions indirectly by altering the affinity of the ribosome for aminoacyl-tRNA, thus increasing their reactivity as acceptors for peptidyl transferase. The polypeptide is Elongation factor P (Nitrosospira multiformis (strain ATCC 25196 / NCIMB 11849 / C 71)).